Consider the following 247-residue polypeptide: ATP synthase subunit a, chloroplastic (247 aa).

The next 5 helical transmembrane spans lie at 38–58 (QVLI…FIAV), 95–115 (VPFI…GALL), 134–154 (INTT…AGLS), 199–219 (LVVV…VMFL), and 220–240 (GLFT…AYIG).

The protein belongs to the ATPase A chain family. In terms of assembly, F-type ATPases have 2 components, CF(1) - the catalytic core - and CF(0) - the membrane proton channel. CF(1) has five subunits: alpha(3), beta(3), gamma(1), delta(1), epsilon(1). CF(0) has four main subunits: a, b, b' and c.

Its subcellular location is the plastid. The protein resides in the chloroplast thylakoid membrane. Its function is as follows. Key component of the proton channel; it plays a direct role in the translocation of protons across the membrane. In Citrus sinensis (Sweet orange), this protein is ATP synthase subunit a, chloroplastic.